A 481-amino-acid polypeptide reads, in one-letter code: NADH-quinone oxidoreductase subunit N (481 aa).

14 helical membrane passes run 11–31 (AIPE…DLFW), 38–58 (LAAV…VFEM), 69–89 (FVLD…VLMV), 107–127 (VFVL…GGSL), 128–148 (LSVY…VAFY), 162–182 (FVLG…LYGL), 203–223 (LVLV…LGAA), 237–257 (PTVV…ALII), 271–291 (WQQI…VIAI), 299–319 (MLAY…VAGT), 327–347 (FFYT…ILLV), 370–390 (YAFL…TVGF), 401–421 (VAAG…IGAF), and 457–477 (LALL…FYAM).

The protein belongs to the complex I subunit 2 family. In terms of assembly, NDH-1 is composed of 14 different subunits. Subunits NuoA, H, J, K, L, M, N constitute the membrane sector of the complex.

It is found in the cell inner membrane. The catalysed reaction is a quinone + NADH + 5 H(+)(in) = a quinol + NAD(+) + 4 H(+)(out). Functionally, NDH-1 shuttles electrons from NADH, via FMN and iron-sulfur (Fe-S) centers, to quinones in the respiratory chain. The immediate electron acceptor for the enzyme in this species is believed to be ubiquinone. Couples the redox reaction to proton translocation (for every two electrons transferred, four hydrogen ions are translocated across the cytoplasmic membrane), and thus conserves the redox energy in a proton gradient. This is NADH-quinone oxidoreductase subunit N from Acidithiobacillus ferrooxidans (strain ATCC 23270 / DSM 14882 / CIP 104768 / NCIMB 8455) (Ferrobacillus ferrooxidans (strain ATCC 23270)).